Here is a 293-residue protein sequence, read N- to C-terminus: MQIIHTIEELRQALAPARQQGKKIGFVPTMGYLHKGHLELVRRARVENDVTLVSIFVNPLQFGANEDLGRYPRDLERDAGLLHDAQVDYLFAPTVSDMYPRPMQTVVDVPPLGNQMEGEARPGHFAGVATVVSKLFNIVGPDAAYFGEKDFQQLVIIRRMVDDMAIPVRIVGVETVREDDGLACSSRNVYLTPEQRRAAIIVPQALDEADRLYRSGMDDPDALEAAIRTFISRQPLAVPEVIAIRDPETLERLPALQGRPILVALFVRVGATRLLDNRVIGHAAPQITQERAA.

An ATP-binding site is contributed by 30–37; that stretch reads MGYLHKGH. His37 functions as the Proton donor in the catalytic mechanism. Gln61 contacts (R)-pantoate. Residue Gln61 coordinates beta-alanine. 147–150 lines the ATP pocket; sequence GEKD. Position 153 (Gln153) interacts with (R)-pantoate. ATP is bound by residues Val176 and 184–187; that span reads CSSR.

This sequence belongs to the pantothenate synthetase family. In terms of assembly, homodimer.

The protein resides in the cytoplasm. The enzyme catalyses (R)-pantoate + beta-alanine + ATP = (R)-pantothenate + AMP + diphosphate + H(+). The protein operates within cofactor biosynthesis; (R)-pantothenate biosynthesis; (R)-pantothenate from (R)-pantoate and beta-alanine: step 1/1. Its function is as follows. Catalyzes the condensation of pantoate with beta-alanine in an ATP-dependent reaction via a pantoyl-adenylate intermediate. The polypeptide is Pantothenate synthetase (Brucella canis (strain ATCC 23365 / NCTC 10854 / RM-666)).